Consider the following 1380-residue polypeptide: DNA-directed RNA polymerase subunit beta (1380 aa).

Belongs to the RNA polymerase beta chain family. The RNAP catalytic core consists of 2 alpha, 1 beta, 1 beta' and 1 omega subunit. When a sigma factor is associated with the core the holoenzyme is formed, which can initiate transcription.

The catalysed reaction is RNA(n) + a ribonucleoside 5'-triphosphate = RNA(n+1) + diphosphate. Functionally, DNA-dependent RNA polymerase catalyzes the transcription of DNA into RNA using the four ribonucleoside triphosphates as substrates. This Nitrobacter hamburgensis (strain DSM 10229 / NCIMB 13809 / X14) protein is DNA-directed RNA polymerase subunit beta.